A 132-amino-acid polypeptide reads, in one-letter code: MKRVITYGTYDLLHYGHIELLRRAREMGDYLIVALSTDEFNQIKHKKSYYDYEQRKMMLESIRYVDLVIPEKGWGQKEDDVEKFDVDVFVMGHDWEGEFDFLKDKCEVIYLKRTEGISTTKIKQELYGKDAK.

CTP is bound by residues 9–10 (TY) and 14–17 (HYGH). Substrate is bound at residue Lys44. Lys46 is a CTP binding site. Position 77 (Lys77) interacts with substrate. 113–120 (RTEGISTT) lines the CTP pocket.

This sequence belongs to the cytidylyltransferase family. As to quaternary structure, homotetramer or homodimer.

The protein localises to the cytoplasm. It carries out the reaction sn-glycerol 3-phosphate + CTP + H(+) = CDP-glycerol + diphosphate. The protein operates within cell wall biogenesis; poly(ribitol phosphate) teichoic acid biosynthesis. In terms of biological role, catalyzes the transfer of the cytidylyl group of CTP to sn-glycerol 3-phosphate so the activated glycerol 3-phosphate can be used for teichoic acid synthesis, via incorporation into both the linkage unit by TarB and TarF. This chain is Glycerol-3-phosphate cytidylyltransferase, found in Staphylococcus aureus (strain NCTC 8325 / PS 47).